The primary structure comprises 126 residues: Profilin-1B (126 aa).

Residues 2–36 form an actin binding region; it reads SWQTYVDTNLVGTGAVTQAAILGLDGNTWATSAGF. Lys-104 bears the N6,N6,N6-trimethyllysine mark.

The protein belongs to the profilin family. As to quaternary structure, occurs in many kinds of cells as a complex with monomeric actin in a 1:1 ratio.

The protein resides in the cytoplasm. Its subcellular location is the cytoskeleton. Binds to actin and affects the structure of the cytoskeleton. At high concentrations, profilin prevents the polymerization of actin, whereas it enhances it at low concentrations. By binding to PIP2, it inhibits the formation of IP3 and DG. The protein is Profilin-1B of Acanthamoeba castellanii (Amoeba).